Reading from the N-terminus, the 75-residue chain is Translational regulator CsrA (75 aa).

Belongs to the CsrA/RsmA family. In terms of assembly, homodimer; the beta-strands of each monomer intercalate to form a hydrophobic core, while the alpha-helices form wings that extend away from the core.

It localises to the cytoplasm. In terms of biological role, a translational regulator that binds mRNA to regulate translation initiation and/or mRNA stability. Usually binds in the 5'-UTR at or near the Shine-Dalgarno sequence preventing ribosome-binding, thus repressing translation. Its main target seems to be the major flagellin gene, while its function is anatagonized by FliW. The sequence is that of Translational regulator CsrA from Alkaliphilus metalliredigens (strain QYMF).